A 257-amino-acid chain; its full sequence is Leucine-rich repeat-containing protein 3 (257 aa).

Residues 1–32 form the signal peptide; that stretch reads MGPRGRQSPSATLAPSQGSCFFILFCLRLGAS. An LRRNT domain is found at 33 to 64; the sequence is CPQACQCPDHAGAVAVHCSSRGLQEIPRDIPA. 3 LRR repeats span residues 65–86, 89–110, and 114–135; these read DTVLLKLDANRISRVPNGAFQH, QLRELDLSHNAIEAIGPAAFSG, and GLRLLDLSHNRIRRIPKDALGK. The region spanning 145 to 198 is the LRRCT domain; sequence NPLHCECALQEALWELKLDPDSVDEIACHTSAQEQFVGKPLIQVLDSGASFCST. A helical transmembrane segment spans residues 205 to 225; the sequence is VAMLVTMFGWFTMVIAYVVYY.

Belongs to the LRRC3 family.

It localises to the membrane. This Mus musculus (Mouse) protein is Leucine-rich repeat-containing protein 3 (Lrrc3).